The chain runs to 266 residues: 3-methyl-2-oxobutanoate hydroxymethyltransferase 2 (266 aa).

Aspartate 45 and aspartate 84 together coordinate Mg(2+). Residues 45 to 46 (DS), aspartate 84, and lysine 112 each bind 3-methyl-2-oxobutanoate. Mg(2+) is bound at residue glutamate 114. Residue glutamate 181 is the Proton acceptor of the active site.

It belongs to the PanB family. As to quaternary structure, homodecamer; pentamer of dimers. The cofactor is Mg(2+).

It is found in the cytoplasm. The catalysed reaction is 3-methyl-2-oxobutanoate + (6R)-5,10-methylene-5,6,7,8-tetrahydrofolate + H2O = 2-dehydropantoate + (6S)-5,6,7,8-tetrahydrofolate. The protein operates within cofactor biosynthesis; (R)-pantothenate biosynthesis; (R)-pantoate from 3-methyl-2-oxobutanoate: step 1/2. In terms of biological role, catalyzes the reversible reaction in which hydroxymethyl group from 5,10-methylenetetrahydrofolate is transferred onto alpha-ketoisovalerate to form ketopantoate. The chain is 3-methyl-2-oxobutanoate hydroxymethyltransferase 2 from Pseudomonas entomophila (strain L48).